The primary structure comprises 1116 residues: MERAISPGLLVRALLLLLLLLGLAARTVAAGRARGLPAPTAEAAFGLGAAAAPTSATRVPAAGAVAAAEVTVEDAEALPAAAGEQEPRGPEPDDETELRPRGRSLVIISTLDGRIAALDPENHGKKQWDLDVGSGSLVSSSLSKPEVFGNKMIIPSLDGALFQWDQDRESMETVPFTVESLLESSYKFGDDVVLVGGKSLTTYGLSAYSGKVRYICSALGCRQWDSDEMEQEEDILLLQRTQKTVRAVGPRSGNEKWNFSVGHFELRYIPDMETRAGFIESTFKPNENTEESKIISDVEEQEAAIMDIVIKVSVADWKVMAFSKKGGHLEWEYQFCTPIASAWLLKDGKVIPISLFDDTSYTSNDDVLEDEEDIVEAARGATENSVYLGMYRGQLYLQSSVRISEKFPSSPKALESVTNENAIIPLPTIKWKPLIHSPSRTPVLVGSDEFDKCLSNDKFSHEEYSNGALSILQYPYDNGYYLPYYKRERNKRSTQITVRFLDNPHYNKNIRKKDPVLLLHWWKEIVATILFCIIATTFIVRRLFHPHPHRQRKESETQCQTENKYDSVSGEANDSSWNDIKNSGYISRYLTDFEPIQCLGRGGFGVVFEAKNKVDDCNYAIKRIRLPNRELAREKVMREVKALAKLEHPGIVRYFNAWLEAPPEKWQEKMDEIWLKDESTDWPLSSPSPMDAPSVKIRRMDPFATKEHIEIIAPSPQRSRSFSVGISCDQTSSSESQFSPLEFSGMDHEDISESVDAAYNLQDSCLTDCDVEDGTMDGNDEGHSFELCPSEASPYVRSRERTSSSIVFEDSGCDNASSKEEPKTNRLHIGNHCANKLTAFKPTSSKSSSEATLSISPPRPTTLSLDLTKNTTEKLQPSSPKVYLYIQMQLCRKENLKDWMNGRCTIEERERSVCLHIFLQIAEAVEFLHSKGLMHRDLKPSNIFFTMDDVVKVGDFGLVTAMDQDEEEQTVLTPMPAYARHTGQVGTKLYMSPEQIHGNSYSHKVDIFSLGLILFELLYPFSTQMERVRTLTDVRNLKFPPLFTQKYPCEYVMVQDMLSPSPMERPEAINIIENAVFEDLDFPGKTVLRQRSRSLSSSGTKHSRQSNNSHSPLPSN.

Positions 1-29 are cleaved as a signal peptide; the sequence is MERAISPGLLVRALLLLLLLLGLAARTVA. At 30–514 the chain is on the lumenal side; it reads AGRARGLPAP…HYNKNIRKKD (485 aa). The interval 77-101 is disordered; that stretch reads ALPAAAGEQEPRGPEPDDETELRPR. N-linked (GlcNAc...) asparagine glycosylation occurs at Asn258. A helical membrane pass occupies residues 515–535; it reads PVLLLHWWKEIVATILFCIIA. At 536–1116 the chain is on the cytoplasmic side; it reads TTFIVRRLFH…NNSHSPLPSN (581 aa). A disordered region spans residues 550-571; the sequence is RQRKESETQCQTENKYDSVSGE. Positions 593–1077 constitute a Protein kinase domain; the sequence is FEPIQCLGRG…AINIIENAVF (485 aa). 599–607 serves as a coordination point for ATP; the sequence is LGRGGFGVV. A Phosphotyrosine; by autocatalysis modification is found at Tyr619. Position 622 (Lys622) interacts with ATP. The tract at residues 647–888 is insert loop; that stretch reads EHPGIVRYFN…SPKVYLYIQM (242 aa). Ser715 carries the post-translational modification Phosphoserine. A Phosphothreonine modification is found at Thr802. Positions 841 to 863 are disordered; the sequence is KPTSSKSSSEATLSISPPRPTTL. Residues 844–856 are compositionally biased toward low complexity; it reads SSKSSSEATLSIS. The active-site Proton acceptor is the Asp937. Position 982 is a phosphothreonine (Thr982). A disordered region spans residues 1090–1116; sequence QRSRSLSSSGTKHSRQSNNSHSPLPSN. Phosphoserine is present on Ser1094. The segment covering 1105-1116 has biased composition (polar residues); sequence QSNNSHSPLPSN.

The protein belongs to the protein kinase superfamily. Ser/Thr protein kinase family. GCN2 subfamily. As to quaternary structure, forms dimers with HSPA5/BIP in resting cells. Homotetramerizes in response to endoplasmic reticulum (ER) stress, leading to its activation. Interacts with HSP90B1/GRP94. Interacts with DNAJC3; inhibiting EIF2AK3/PERK activity. Interacts with ATAD3A; ATAD3A and EIF2S1/eIF-2-alpha occupy a common binding site within the cytoplasmic loop of EIF2AK3/PERK, leading to prevent EIF2AK3/PERK association with its substrate EIF2S1/eIF-2-alpha. Interacts with MFN2. Interacts with TMEM33. Interacts with PDIA6. Interacts with LACC1. Oligomerization of the N-terminal ER luminal domain by ER stress promotes EIF2AK3/PERK trans-autophosphorylation of the C-terminal cytoplasmic kinase domain at multiple residues including Thr-982 on the kinase activation loop. Autophosphorylated at Tyr-619 following endoplasmic reticulum stress, leading to activate its activity. Dephosphorylated at Tyr-619 by PTPN1/PTP1B, leading to inactivate its enzyme activity. Phosphorylation at Thr-802 by AKT (AKT1, AKT2 and/or AKT3) inactivates EIF2AK3/PERK. Post-translationally, ADP-ribosylated by PARP16 upon ER stress, which increases kinase activity. In terms of tissue distribution, ubiquitous. A high level expression is seen in secretory tissues.

The protein localises to the endoplasmic reticulum membrane. The enzyme catalyses L-seryl-[protein] + ATP = O-phospho-L-seryl-[protein] + ADP + H(+). It catalyses the reaction L-threonyl-[protein] + ATP = O-phospho-L-threonyl-[protein] + ADP + H(+). The catalysed reaction is L-tyrosyl-[protein] + ATP = O-phospho-L-tyrosyl-[protein] + ADP + H(+). Inhibited by HSPA5/BIP in absence of stress. Perturbation in protein folding in the endoplasmic reticulum (ER) promotes reversible dissociation from HSPA5/BIP and oligomerization, resulting in trans-autophosphorylation and kinase activity induction. Inactivated following phosphorylation at Thr-802 by AKT (AKT1, AKT2 and/or AKT3). Inhibited by ATAD3A at mitochondria-endoplasmic reticulum contact sites, providing a safe haven for mitochondrial protein translation during ER stress. In terms of biological role, metabolic-stress sensing protein kinase that phosphorylates the alpha subunit of eukaryotic translation initiation factor 2 (EIF2S1/eIF-2-alpha) in response to various stress, such as unfolded protein response (UPR). Key effector of the integrated stress response (ISR) to unfolded proteins: EIF2AK3/PERK specifically recognizes and binds misfolded proteins, leading to its activation and EIF2S1/eIF-2-alpha phosphorylation. EIF2S1/eIF-2-alpha phosphorylation in response to stress converts EIF2S1/eIF-2-alpha in a global protein synthesis inhibitor, leading to a global attenuation of cap-dependent translation, while concomitantly initiating the preferential translation of ISR-specific mRNAs, such as the transcriptional activators ATF4 and QRICH1, and hence allowing ATF4- and QRICH1-mediated reprogramming. The EIF2AK3/PERK-mediated unfolded protein response increases mitochondrial oxidative phosphorylation by promoting ATF4-mediated expression of COX7A2L/SCAF1, thereby increasing formation of respiratory chain supercomplexes. In contrast to most subcellular compartments, mitochondria are protected from the EIF2AK3/PERK-mediated unfolded protein response due to EIF2AK3/PERK inhibition by ATAD3A at mitochondria-endoplasmic reticulum contact sites. In addition to EIF2S1/eIF-2-alpha, also phosphorylates NFE2L2/NRF2 in response to stress, promoting release of NFE2L2/NRF2 from the BCR(KEAP1) complex, leading to nuclear accumulation and activation of NFE2L2/NRF2. Serves as a critical effector of unfolded protein response (UPR)-induced G1 growth arrest due to the loss of cyclin-D1 (CCND1). Involved in control of mitochondrial morphology and function. The sequence is that of Eukaryotic translation initiation factor 2-alpha kinase 3 from Homo sapiens (Human).